Here is a 352-residue protein sequence, read N- to C-terminus: Photosystem II D2 protein (352 aa).

The Cytoplasmic portion of the chain corresponds to 1–31 (MTIAIGRAPAERGWFDILDDWLKRDRFVFVG). A helical membrane pass occupies residues 32 to 53 (WSGILLFPCAYLALGGWLTGTT). Topologically, residues 54 to 108 (FVTSWYTHGLASSYLEGCNFLTVAVSTPANSMGHSLLLLWGPEAQGDFTRWCQLG) are lumenal. A helical transmembrane segment spans residues 109–131 (GLWTFIALHGAFGLIGFMLRQFE). His117 is a binding site for chlorophyll a. Gln129 provides a ligand contact to pheophytin a. The Cytoplasmic portion of the chain corresponds to 132 to 140 (IARLVGVRP). A helical membrane pass occupies residues 141-160 (YNAIAFSAPIAVFVSVFLIY). Residue Asn142 coordinates pheophytin a. The Lumenal portion of the chain corresponds to 161-193 (PLGQSSWFFAPSFGVAAIFRFLLFFQGFHNWTL). A helical membrane pass occupies residues 194 to 217 (NPFHMMGVAGVLGGALLCAIHGAT). His197 contacts chlorophyll a. A plastoquinone-binding residues include His214 and Phe261. Residue His214 participates in Fe cation binding. Over 218–265 (VENTLFQDGEGASTFRAFNPTQAEETYSMVTANRFWSQIFGIAFSNKR) the chain is Cytoplasmic. The helical transmembrane segment at 266 to 288 (WLHFFMLFVPVTGLWMSAIGVVG) threads the bilayer. Fe cation is bound at residue His268. The Lumenal portion of the chain corresponds to 289–352 (LALNLRSYDF…EEVLPRGNAL (64 aa)).

Belongs to the reaction center PufL/M/PsbA/D family. PSII is composed of 1 copy each of membrane proteins PsbA, PsbB, PsbC, PsbD, PsbE, PsbF, PsbH, PsbI, PsbJ, PsbK, PsbL, PsbM, PsbT, PsbX, PsbY, PsbZ, Psb30/Ycf12, peripheral proteins PsbO, CyanoQ (PsbQ), PsbU, PsbV and a large number of cofactors. It forms dimeric complexes. Part of a photosystem II (PSII) assembly intermediate complex PSII-I; crystallized from a strain deleted of psbJ, it forms monomeric PSII before addition of the oxygen evolving complex. PSII-I includes 3 assembly factors not found in mature PSII (Psb27, Psb28 and Psb34). It depends on The D1/D2 heterodimer binds P680, chlorophylls that are the primary electron donor of PSII, and subsequent electron acceptors. It shares a non-heme iron and each subunit binds pheophytin, quinone, additional chlorophylls, carotenoids and lipids. There is also a Cl(-1) ion associated with D1 and D2, which is required for oxygen evolution. PSII binds additional chlorophylls, carotenoids and specific lipids. as a cofactor.

It is found in the cellular thylakoid membrane. It carries out the reaction 2 a plastoquinone + 4 hnu + 2 H2O = 2 a plastoquinol + O2. In terms of biological role, photosystem II (PSII) is a light-driven water:plastoquinone oxidoreductase that uses light energy to abstract electrons from H(2)O, generating O(2) and a proton gradient subsequently used for ATP formation. It consists of a core antenna complex that captures photons, and an electron transfer chain that converts photonic excitation into a charge separation. The D1/D2 (PsbA/PsbD) reaction center heterodimer binds P680, the primary electron donor of PSII as well as several subsequent electron acceptors. D2 is needed for assembly of a stable PSII complex. The chain is Photosystem II D2 protein from Thermosynechococcus vestitus (strain NIES-2133 / IAM M-273 / BP-1).